The following is a 387-amino-acid chain: (S)-8-oxocitronellyl enol synthase (387 aa).

Residues 36 to 38, 64 to 65, 82 to 83, 106 to 107, and Q140 contribute to the NADP(+) site; these read TGI, RR, DI, and SW. Active-site residues include K144 and Y177. K144 and Y177 together coordinate substrate. Residues Y177 and 211 to 213 contribute to the NADP(+) site; that span reads SMM.

This sequence belongs to the short-chain dehydrogenases/reductases (SDR) family. Highly divergent. In terms of tissue distribution, expressed in leaves.

It catalyses the reaction (S)-8-oxocitronellyl enol + NADP(+) = (6E)-8-oxogeranial + NADPH + H(+). The catalysed reaction is (S)-8-oxocitronellyl enol + NAD(+) = (6E)-8-oxogeranial + NADH + H(+). It carries out the reaction (R)-8-oxocitronellyl enol + NADP(+) = (6E)-8-oxogeranial + NADPH + H(+). Iridoid synthase that catalyzes the first step in generation of the iridoid ring scaffold using the linear monoterpene (6E)-8-oxogeranial as substrate. Reduces 8-oxogeranial, generating an unstable product that is subsequently cyclized into several possible products, either non-enzymically or by dedicated cyclases. Iridoids comprise a large family of distinctive bicyclic monoterpenes that possess a wide range of pharmacological activities, including anticancer, anti-inflammatory, antifungal and antibacterial activities. In Antirrhinum majus (Garden snapdragon), this protein is (S)-8-oxocitronellyl enol synthase.